Here is a 428-residue protein sequence, read N- to C-terminus: 3-phosphoshikimate 1-carboxyvinyltransferase (428 aa).

Residues Lys22, Ser23, and Arg27 each coordinate 3-phosphoshikimate. Phosphoenolpyruvate is bound at residue Lys22. Residues Gly96 and Arg124 each contribute to the phosphoenolpyruvate site. 3-phosphoshikimate contacts are provided by Ser170, Ser171, Gln172, Ser198, Asp314, Asn337, and Lys341. Gln172 serves as a coordination point for phosphoenolpyruvate. The active-site Proton acceptor is the Asp314. Residues Arg345, Arg387, and Lys412 each contribute to the phosphoenolpyruvate site.

This sequence belongs to the EPSP synthase family. In terms of assembly, monomer.

Its subcellular location is the cytoplasm. It catalyses the reaction 3-phosphoshikimate + phosphoenolpyruvate = 5-O-(1-carboxyvinyl)-3-phosphoshikimate + phosphate. Its pathway is metabolic intermediate biosynthesis; chorismate biosynthesis; chorismate from D-erythrose 4-phosphate and phosphoenolpyruvate: step 6/7. Functionally, catalyzes the transfer of the enolpyruvyl moiety of phosphoenolpyruvate (PEP) to the 5-hydroxyl of shikimate-3-phosphate (S3P) to produce enolpyruvyl shikimate-3-phosphate and inorganic phosphate. This Shewanella amazonensis (strain ATCC BAA-1098 / SB2B) protein is 3-phosphoshikimate 1-carboxyvinyltransferase.